Consider the following 111-residue polypeptide: Prothymosin alpha-A (111 aa).

The tract at residues 1-111 (MSDTAVDASV…IKKQKTDEDD (111 aa)) is disordered. The span at 9 to 42 (SVEKTTKDLKAKEKEVVEEAENGKDKPTNGKAEN) shows a compositional bias: basic and acidic residues. 2 stretches are compositionally biased toward acidic residues: residues 43 to 81 (EENG…DEVE) and 90 to 100 (EDDEDDDDDDV). A compositionally biased stretch (basic and acidic residues) spans 101–111 (EIKKQKTDEDD).

Belongs to the pro/parathymosin family.

The protein localises to the nucleus. This is Prothymosin alpha-A (ptma-a) from Xenopus laevis (African clawed frog).